The primary structure comprises 366 residues: MSINSSKQPASSAAGLIANTTCQTENRLSVFFSIIFMTVGIVSNSLAIAILMKAYQRFRRKSKASFLLLASGLVITDFFGHLINGGIAVFVYASDKDWIRFDQSNILCSVFGISMVFSGLCPLFLGSTMAIERCIGVTNPLFHSTKITSKHVKMILSGVCMFAVFVALLPILGHRDYQIQASRTWCFYNTEHIEDWEDRFYLLFFSSLGLLALGISFSCNAVTGVTLLRVKFRSQQHRQGRSHHLEMVIQLLAIMCVSCVCWSPFLVTMANIAINGNNSPVTCETTLFALRMATWNQILDPWVYILLRKAVLRNLYKLASRCCGVNIISLHIWELSSIKNSLKVAAISESPAAEKENQQASSEAGL.

Topologically, residues 1-31 are extracellular; it reads MSINSSKQPASSAAGLIANTTCQTENRLSVF. N4 and N19 each carry an N-linked (GlcNAc...) asparagine glycan. Residues 32 to 55 traverse the membrane as a helical segment; that stretch reads FSIIFMTVGIVSNSLAIAILMKAY. The Cytoplasmic segment spans residues 56 to 69; that stretch reads QRFRRKSKASFLLL. Residues 70–90 form a helical membrane-spanning segment; that stretch reads ASGLVITDFFGHLINGGIAVF. The Extracellular portion of the chain corresponds to 91–109; the sequence is VYASDKDWIRFDQSNILCS. A disulfide bridge links C108 with C186. A helical membrane pass occupies residues 110–131; that stretch reads VFGISMVFSGLCPLFLGSTMAI. Over 132–152 the chain is Cytoplasmic; it reads ERCIGVTNPLFHSTKITSKHV. The helical transmembrane segment at 153–175 threads the bilayer; it reads KMILSGVCMFAVFVALLPILGHR. The Extracellular segment spans residues 176-198; the sequence is DYQIQASRTWCFYNTEHIEDWED. Residues 199–224 traverse the membrane as a helical segment; the sequence is RFYLLFFSSLGLLALGISFSCNAVTG. Over 225–250 the chain is Cytoplasmic; sequence VTLLRVKFRSQQHRQGRSHHLEMVIQ. A helical transmembrane segment spans residues 251–267; sequence LLAIMCVSCVCWSPFLV. Residues 268–285 are Extracellular-facing; sequence TMANIAINGNNSPVTCET. Residues 286-307 traverse the membrane as a helical segment; it reads TLFALRMATWNQILDPWVYILL. At 308–366 the chain is on the cytoplasmic side; sequence RKAVLRNLYKLASRCCGVNIISLHIWELSSIKNSLKVAAISESPAAEKENQQASSEAGL.

The protein belongs to the G-protein coupled receptor 1 family. As to expression, highest expression in pregnant ovary. Also found in a low extent in the kidney. In the brain, expressed in astrocytes and oligodendrocytes, and meningeal fibroblasts, but not in migroglia cells.

The protein resides in the cell membrane. Functionally, receptor for prostaglandin F2-alpha (PGF2-alpha). The activity of this receptor is mediated by G proteins which activate a phosphatidylinositol-calcium second messenger system. Initiates luteolysis in the corpus luteum. This chain is Prostaglandin F2-alpha receptor (Ptgfr), found in Rattus norvegicus (Rat).